We begin with the raw amino-acid sequence, 189 residues long: NADH-quinone oxidoreductase subunit B (189 aa).

4 residues coordinate [4Fe-4S] cluster: Cys-39, Cys-40, Cys-104, and Cys-135.

Belongs to the complex I 20 kDa subunit family. As to quaternary structure, NDH-1 is composed of 14 different subunits. Subunits NuoB, C, D, E, F, and G constitute the peripheral sector of the complex. The cofactor is [4Fe-4S] cluster.

The protein localises to the cell inner membrane. It carries out the reaction a quinone + NADH + 5 H(+)(in) = a quinol + NAD(+) + 4 H(+)(out). NDH-1 shuttles electrons from NADH, via FMN and iron-sulfur (Fe-S) centers, to quinones in the respiratory chain. The immediate electron acceptor for the enzyme in this species is believed to be a menaquinone. Couples the redox reaction to proton translocation (for every two electrons transferred, four hydrogen ions are translocated across the cytoplasmic membrane), and thus conserves the redox energy in a proton gradient. The polypeptide is NADH-quinone oxidoreductase subunit B (Chlorobium phaeobacteroides (strain DSM 266 / SMG 266 / 2430)).